The chain runs to 469 residues: Glutamine synthetase (469 aa).

Residues 14–98 (NDVKYVDLRF…ITCDVLEPTT (85 aa)) enclose the GS beta-grasp domain. The region spanning 106 to 469 (PRGIAKKAEA…PVEFDMYYSG (364 aa)) is the GS catalytic domain. 2 residues coordinate Mg(2+): glutamate 131 and glutamate 133. ATP is bound at residue glutamate 209. Positions 214 and 221 each coordinate Mg(2+). Residues 265 to 266 (NG) and glycine 266 each bind L-glutamate. Histidine 270 is a binding site for Mg(2+). ATP-binding positions include 272–274 (HQS) and serine 274. 3 residues coordinate L-glutamate: arginine 322, glutamate 328, and arginine 340. ATP contacts are provided by arginine 340, arginine 345, and lysine 353. Glutamate 358 is a binding site for Mg(2+). Residue arginine 360 coordinates L-glutamate. Residue tyrosine 398 is modified to O-AMP-tyrosine.

The protein belongs to the glutamine synthetase family. In terms of assembly, oligomer of 12 subunits arranged in the form of two hexameric ring. The cofactor is Mg(2+).

Its subcellular location is the cytoplasm. The enzyme catalyses L-glutamate + NH4(+) + ATP = L-glutamine + ADP + phosphate + H(+). With respect to regulation, the activity of this enzyme could be controlled by adenylation under conditions of abundant glutamine. In terms of biological role, catalyzes the ATP-dependent biosynthesis of glutamine from glutamate and ammonia. In Bradyrhizobium diazoefficiens (strain JCM 10833 / BCRC 13528 / IAM 13628 / NBRC 14792 / USDA 110), this protein is Glutamine synthetase.